The following is a 112-amino-acid chain: Gastrula zinc finger protein XlCGF9.1 (112 aa).

4 C2H2-type zinc fingers span residues 6–28, 34–56, 62–84, and 90–112; these read FICS…MKIH, FCCP…ERTH, FTCP…RIIH, and YSCP…FKIH.

Belongs to the krueppel C2H2-type zinc-finger protein family.

It is found in the nucleus. May be involved in transcriptional regulation. This chain is Gastrula zinc finger protein XlCGF9.1, found in Xenopus laevis (African clawed frog).